The following is a 243-amino-acid chain: Exosome complex component Rrp41 (243 aa).

The protein belongs to the RNase PH family. Rrp41 subfamily. In terms of assembly, component of the archaeal exosome complex. Forms a hexameric ring-like arrangement composed of 3 Rrp41-Rrp42 heterodimers. The hexameric ring associates with a trimer of Rrp4 and/or Csl4 subunits.

It is found in the cytoplasm. Catalytic component of the exosome, which is a complex involved in RNA degradation. Has 3'-&gt;5' exoribonuclease activity. Can also synthesize heteromeric RNA-tails. The polypeptide is Exosome complex component Rrp41 (Sulfolobus acidocaldarius (strain ATCC 33909 / DSM 639 / JCM 8929 / NBRC 15157 / NCIMB 11770)).